The following is a 383-amino-acid chain: Polyketide synthase 4 (383 aa).

Cys-164 acts as the Nucleophile and monoketide coumarate intermediate in catalysis.

The protein belongs to the thiolase-like superfamily. Chalcone/stilbene synthases family. As to quaternary structure, homodimer. In terms of tissue distribution, expressed in fruits.

The catalysed reaction is 4-coumaroyl-CoA + malonyl-CoA + H2O + H(+) = 4-hydroxybenzalacetone + 2 CO2 + 2 CoA. It carries out the reaction (E)-4-coumaroyl-CoA + 3 malonyl-CoA + 3 H(+) = 2',4,4',6'-tetrahydroxychalcone + 3 CO2 + 4 CoA. It participates in secondary metabolite biosynthesis; flavonoid biosynthesis. With respect to regulation, inhibited by glutathione. Functionally, bifunctional polyketide synthase producing both 4-hydroxybenzalacetone and naringenin chalcone. Can use p-coumaryl-CoA and ferulyl-CoA as substrates. Catalyzes the initial key reaction step in the biosynthesis of phenylbutanoids. This is Polyketide synthase 4 (PKS4) from Rubus idaeus (Raspberry).